A 753-amino-acid polypeptide reads, in one-letter code: Neuroendocrine convertase 1 (753 aa).

The signal sequence occupies residues 1 to 27; it reads MGRRAWTLQCTAFSLFCAWCAMNSVKA. Positions 28–110 are excised as a propeptide; it reads KKQFVNEWAA…QQYEKERSKR (83 aa). The Peptidase S8 domain maps to 129–450; it reads QWYLQDTRMT…FGLLNAKALV (322 aa). The Charge relay system role is filled by Asp167. The N-linked (GlcNAc...) asparagine glycan is linked to Asn173. The Charge relay system role is filled by His208. Disulfide bonds link Cys225–Cys374 and Cys317–Cys347. Ser382 (charge relay system) is an active-site residue. An N-linked (GlcNAc...) asparagine glycan is attached at Asn401. The region spanning 460–597 is the P/Homo B domain; it reads SVPEKKECVV…KLILHGTSSQ (138 aa). Cys467 and Cys494 are joined by a disulfide. Disordered regions lie at residues 617–657 and 676–695; these read RRGV…RRDE and SKNSPSKQSPKKPPSAKPNI.

Belongs to the peptidase S8 family. Furin subfamily. Ca(2+) is required as a cofactor.

The protein localises to the cytoplasmic vesicle. It is found in the secretory vesicle. The catalysed reaction is Release of protein hormones, neuropeptides and renin from their precursors, generally by hydrolysis of -Lys-Arg-|- bonds.. In terms of biological role, involved in the processing of hormone and other protein precursors at sites comprised of pairs of basic amino acid residues. Substrates include POMC, renin, enkephalin, dynorphin, somatostatin, insulin and AGRP. This is Neuroendocrine convertase 1 (PCSK1) from Bos taurus (Bovine).